The primary structure comprises 1427 residues: DNA-directed RNA polymerase subunit beta' (1427 aa).

Positions 70, 72, 85, and 88 each coordinate Zn(2+). Positions 461, 463, and 465 each coordinate Mg(2+). Zn(2+) is bound by residues Cys-838, Cys-912, Cys-919, and Cys-922.

It belongs to the RNA polymerase beta' chain family. In terms of assembly, the RNAP catalytic core consists of 2 alpha, 1 beta, 1 beta' and 1 omega subunit. When a sigma factor is associated with the core the holoenzyme is formed, which can initiate transcription. Mg(2+) is required as a cofactor. It depends on Zn(2+) as a cofactor.

It carries out the reaction RNA(n) + a ribonucleoside 5'-triphosphate = RNA(n+1) + diphosphate. Its function is as follows. DNA-dependent RNA polymerase catalyzes the transcription of DNA into RNA using the four ribonucleoside triphosphates as substrates. This Sorangium cellulosum (strain So ce56) (Polyangium cellulosum (strain So ce56)) protein is DNA-directed RNA polymerase subunit beta'.